Reading from the N-terminus, the 304-residue chain is Probable aspartoacylase (304 aa).

H13 and E16 together coordinate Zn(2+). Substrate-binding positions include R55 and 62-63 (NR). Position 105 (H105) interacts with Zn(2+). 2 residues coordinate substrate: E163 and Y273.

Belongs to the AspA/AstE family. Aspartoacylase subfamily. Zn(2+) serves as cofactor.

It catalyses the reaction an N-acyl-L-aspartate + H2O = a carboxylate + L-aspartate. This Prochlorococcus marinus (strain MIT 9313) protein is Probable aspartoacylase.